The sequence spans 234 residues: MSQVPSVTAVQVENVLFPPSVKPPGSTNDLFLGGAGVRGLEIQGKFVKFTAIGVYLENSAVPTLAVKWKGKTVEELADSVDFFRDVVTGPFEKFTKVTTILPLTGRQYSDKVSENCVAFWKSVGIYTDAEAKAIEKFNEVLKDETFPPGNSILFTHSPLGALTMSFSKDGSLPEVGNAVIENKLLTEAVLESIIGKHGVSPEAKKSLAARLSELFCKEAGDEKIEAEKVAPVAC.

3 residues coordinate substrate: Thr-50, Asn-115, and Ser-192.

Belongs to the chalcone isomerase family.

It carries out the reaction a chalcone = a flavanone.. The protein operates within secondary metabolite biosynthesis; flavonoid biosynthesis. Catalyzes the intramolecular cyclization of bicyclic chalcones into tricyclic (S)-flavanones. Responsible for the isomerization of 4,2',4',6'-tetrahydroxychalcone (also termed chalcone) into naringenin. This Vitis vinifera (Grape) protein is Chalcone--flavanone isomerase 1 (CHI1).